A 264-amino-acid chain; its full sequence is Short chain dehydrogenase CPUR_05429 (264 aa).

NADP(+) contacts are provided by I24, D70, N97, and R130. Residues S146 and S147 each act as proton donor in the active site. Positions 161, 165, and 196 each coordinate NADP(+). Y161 serves as the catalytic Proton acceptor. The Lowers pKa of active site Tyr role is filled by K165.

It belongs to the short-chain dehydrogenases/reductases (SDR) family.

The protein operates within pigment biosynthesis. In terms of biological role, short chain dehydrogenase; part of the ergochrome gene cluster responsible for the typical purple-black color of the ergot sclerotia. The ergochrome gene cluster produces several ergot pigments including the yellow ergochrome secalonic acid and its derivatives, as well as the red anthraquinones endocrocin and clavorubin. The pathway begins with the synthesis of atrochrysone thioester by the polyketide synthase (PKS) CPUR_05437. The atrochrysone carboxyl ACP thioesterase CPUR_05436 then breaks the thioester bond and releases the atrochrysone carboxylic acid from CPUR_05437. The atrochrysone carboxylic acid is then converted to atrochrysone which is further transformed into emodin anthrone. The next step is performed by the anthrone oxygenase CPUR_05434 that catalyzes the oxidation of emodinanthrone to emodin. Emodin is further modified to yield monodictyphenone via several steps involving CPUR_05427, CPUR_05428, CPUR_05429 and CPUR_05430. The short chain dehydrogenase/reductase CPUR_05418 then catalyzes the C-5 ketoreduction to give the xanthone skeleton of the monomeric units. Ergochromes formation requires further dimerization steps of different xanthone units, probably catalyzed by the cytochrome P450 monooxygenase CPUR_05419. CPUR_05425, CPUR_05426 and CPUR_05431 are unique to Claviceps, thus it is likely that they are involved in further modification of xanthone units or in their dimerization. The yellow ergochromes and the red anthraquinone pigments endocrocin and clavorubin are products from the same PKS derived precursors and the latter are likely shunt products in the pathway of xanthone biosynthesis. It is proposed that atrochrysone carboxylic acid released from the PKS CPUR_05437 can also be converted to endocrocin anthrone which is further oxidized into endocrocin by CPUR_05435. Endocrocin could be then modified to clavorubin, possibly by CPUR_05423 and CPUR_05431. Clavorubin is the principal anthraquinone metabolite produced by the cluster with a much higher yield compared to endocrocin. In Claviceps purpurea (strain 20.1) (Ergot fungus), this protein is Short chain dehydrogenase CPUR_05429.